The chain runs to 394 residues: NAD(P)H-quinone oxidoreductase subunit H (394 aa).

This sequence belongs to the complex I 49 kDa subunit family. NDH-1 can be composed of about 15 different subunits; different subcomplexes with different compositions have been identified which probably have different functions.

The protein localises to the cellular thylakoid membrane. The enzyme catalyses a plastoquinone + NADH + (n+1) H(+)(in) = a plastoquinol + NAD(+) + n H(+)(out). It carries out the reaction a plastoquinone + NADPH + (n+1) H(+)(in) = a plastoquinol + NADP(+) + n H(+)(out). In terms of biological role, NDH-1 shuttles electrons from an unknown electron donor, via FMN and iron-sulfur (Fe-S) centers, to quinones in the respiratory and/or the photosynthetic chain. The immediate electron acceptor for the enzyme in this species is believed to be plastoquinone. Couples the redox reaction to proton translocation, and thus conserves the redox energy in a proton gradient. Cyanobacterial NDH-1 also plays a role in inorganic carbon-concentration. This Parasynechococcus marenigrum (strain WH8102) protein is NAD(P)H-quinone oxidoreductase subunit H.